Consider the following 501-residue polypeptide: Ribose import ATP-binding protein RbsA (501 aa).

2 consecutive ABC transporter domains span residues 5 to 241 (LQLK…VGRK) and 252 to 495 (APGE…VGKL). 37 to 44 (GENGAGKS) serves as a coordination point for ATP.

Belongs to the ABC transporter superfamily. Ribose importer (TC 3.A.1.2.1) family. As to quaternary structure, the complex is composed of an ATP-binding protein (RbsA), two transmembrane proteins (RbsC) and a solute-binding protein (RbsB).

It is found in the cell inner membrane. The catalysed reaction is D-ribose(out) + ATP + H2O = D-ribose(in) + ADP + phosphate + H(+). In terms of biological role, part of the ABC transporter complex RbsABC involved in ribose import. Responsible for energy coupling to the transport system. In Salmonella typhi, this protein is Ribose import ATP-binding protein RbsA.